The following is a 274-amino-acid chain: ATP synthase subunit delta (274 aa).

The protein belongs to the ATPase delta chain family. As to quaternary structure, F-type ATPases have 2 components, F(1) - the catalytic core - and F(0) - the membrane proton channel. F(1) has five subunits: alpha(3), beta(3), gamma(1), delta(1), epsilon(1). F(0) has three main subunits: a(1), b(2) and c(10-14). The alpha and beta chains form an alternating ring which encloses part of the gamma chain. F(1) is attached to F(0) by a central stalk formed by the gamma and epsilon chains, while a peripheral stalk is formed by the delta and b chains.

It is found in the cell membrane. F(1)F(0) ATP synthase produces ATP from ADP in the presence of a proton or sodium gradient. F-type ATPases consist of two structural domains, F(1) containing the extramembraneous catalytic core and F(0) containing the membrane proton channel, linked together by a central stalk and a peripheral stalk. During catalysis, ATP synthesis in the catalytic domain of F(1) is coupled via a rotary mechanism of the central stalk subunits to proton translocation. Its function is as follows. This protein is part of the stalk that links CF(0) to CF(1). It either transmits conformational changes from CF(0) to CF(1) or is implicated in proton conduction. This Streptomyces coelicolor (strain ATCC BAA-471 / A3(2) / M145) protein is ATP synthase subunit delta.